The sequence spans 534 residues: ATP-dependent RNA helicase DBP3 (534 aa).

The segment at 1-96 (MGSKRKHESG…VSSSSSGYTQ (96 aa)) is disordered. Residues 8–30 (ESGDVEVKKPKHDNEVKGKEKKE) are compositionally biased toward basic and acidic residues. Residues 31–53 (KKEKKEKKEKKEKKEKKEKKEKK) are compositionally biased toward basic residues. A compositionally biased stretch (basic and acidic residues) spans 54–63 (EKKEKNEKKE). Over residues 82–92 (STVSTVSSSSS) the composition is skewed to low complexity. A Q motif motif is present at residues 131–157 (LSFDHVQLQSKIAPIVTKFPKPTPIQS). Residues 160–330 (WPYLLNGDDV…ATFMNKAVKV (171 aa)) form the Helicase ATP-binding domain. 173-180 (AETGSGKT) serves as a coordination point for ATP. The short motif at 278–281 (DEAD) is the DEAD box element. The region spanning 359-504 (RLLQLLRQYG…PVPDELLKFG (146 aa)) is the Helicase C-terminal domain.

The protein belongs to the DEAD box helicase family. DDX5/DBP2 subfamily.

It is found in the nucleus. The protein localises to the nucleolus. It carries out the reaction ATP + H2O = ADP + phosphate + H(+). In terms of biological role, ATP-dependent RNA helicase required for 60S ribosomal subunit synthesis. Involved in efficient pre-rRNA processing, predominantly at site A3, which is necessary for the normal formation of 25S and 5.8S rRNAs. The polypeptide is ATP-dependent RNA helicase DBP3 (DBP3) (Meyerozyma guilliermondii (strain ATCC 6260 / CBS 566 / DSM 6381 / JCM 1539 / NBRC 10279 / NRRL Y-324) (Yeast)).